The chain runs to 376 residues: Palmitoyltransferase PFA4 (376 aa).

The Cytoplasmic portion of the chain corresponds to Met1–Gly11. Residues Ile12–Leu32 traverse the membrane as a helical segment. The Lumenal segment spans residues Asn33–Gln40. The helical transmembrane segment at Leu41–Pro61 threads the bilayer. Residues Pro62–His122 are Cytoplasmic-facing. Residues Val78–Phe128 enclose the DHHC domain. Residue Cys108 is the S-palmitoyl cysteine intermediate of the active site. The helical transmembrane segment at Phe123–Thr143 threads the bilayer. Over Arg144–Glu163 the chain is Lumenal. A helical membrane pass occupies residues Leu164–Leu184. Residues Met185 to Glu376 lie on the Cytoplasmic side of the membrane.

This sequence belongs to the DHHC palmitoyltransferase family. PFA4 subfamily.

The protein resides in the endoplasmic reticulum membrane. The enzyme catalyses L-cysteinyl-[protein] + hexadecanoyl-CoA = S-hexadecanoyl-L-cysteinyl-[protein] + CoA. Mediates the reversible addition of palmitate to target proteins, thereby regulating their membrane association and biological function. This chain is Palmitoyltransferase PFA4, found in Candida glabrata (strain ATCC 2001 / BCRC 20586 / JCM 3761 / NBRC 0622 / NRRL Y-65 / CBS 138) (Yeast).